The sequence spans 431 residues: Protein S-Myc (431 aa).

Phosphotyrosine; by Tyr-kinases is present on tyrosine 36. The 53-residue stretch at 348–400 (ERRRNHNRMERQRRDIMRSSFLNLRDLVPELVHNEKAAKVVILKKATEYIHTL) folds into the bHLH domain. Residues 400–421 (LQADESKLLVERKKLYERQQQL) are leucine-zipper.

As to quaternary structure, efficient DNA binding requires dimerization with another bHLH protein.

The protein localises to the nucleus. Has apoptosis-inducing activity. The polypeptide is Protein S-Myc (Mycs) (Mus musculus (Mouse)).